The chain runs to 430 residues: Protein translocase subunit SecY (430 aa).

The next 10 helical transmembrane spans lie at 18 to 38 (IFFTLAMLVIFKIGTYIPAPG), 68 to 88 (FSIFAMGIMPYITASIVMQLL), 117 to 137 (FAIILAFIQSIGMAFQFNNYL), 148 to 168 (MSYLLIAIVLTTGTAFLLWLG), 179 to 199 (GISIIIFAGILSTLPSSLIQF), 215 to 235 (LQVAGLVIGLVLLTMGAVYVL), 270 to 290 (VIPVIFAMAFFLLPRTLTMFF), 308 to 328 (NIGMVIYIILIIAFTYFYAFV), 368 to 388 (FVGSIFLAVIAILPILATKFM), and 390 to 410 (LPQSIQVGGTSLLIVIGVAIE).

This sequence belongs to the SecY/SEC61-alpha family. As to quaternary structure, component of the Sec protein translocase complex. Heterotrimer consisting of SecY, SecE and SecG subunits. The heterotrimers can form oligomers, although 1 heterotrimer is thought to be able to translocate proteins. Interacts with the ribosome. Interacts with SecDF, and other proteins may be involved. Interacts with SecA.

It localises to the cell membrane. Functionally, the central subunit of the protein translocation channel SecYEG. Consists of two halves formed by TMs 1-5 and 6-10. These two domains form a lateral gate at the front which open onto the bilayer between TMs 2 and 7, and are clamped together by SecE at the back. The channel is closed by both a pore ring composed of hydrophobic SecY resides and a short helix (helix 2A) on the extracellular side of the membrane which forms a plug. The plug probably moves laterally to allow the channel to open. The ring and the pore may move independently. This chain is Protein translocase subunit SecY, found in Staphylococcus carnosus (strain TM300).